A 588-amino-acid polypeptide reads, in one-letter code: Proteasome-associated ATPase (588 aa).

Over residues 1 to 10 (MAAHDDDMNR) the composition is skewed to basic and acidic residues. Residues 1 to 23 (MAAHDDDMNRGIRPGRGSEDPAG) form a disordered region. Residues 47–94 (RILEERIVELQTNLAGVSAQNERLAGTLREARDQIVALKEEVDRLAQP) are a coiled coil. 276 to 281 (GCGKTL) is a binding site for ATP. A docks into pockets in the proteasome alpha-ring region spans residues 587–588 (YL).

Belongs to the AAA ATPase family. In terms of assembly, homohexamer. Assembles into a hexameric ring structure that caps the 20S proteasome core. Strongly interacts with the prokaryotic ubiquitin-like protein Pup through a hydrophobic interface; the interacting region of ARC lies in its N-terminal coiled-coil domain. There is one Pup binding site per ARC hexamer ring. Upon ATP-binding, the C-terminus of ARC interacts with the alpha-rings of the proteasome core, possibly by binding to the intersubunit pockets.

It participates in protein degradation; proteasomal Pup-dependent pathway. Functionally, ATPase which is responsible for recognizing, binding, unfolding and translocation of pupylated proteins into the bacterial 20S proteasome core particle. May be essential for opening the gate of the 20S proteasome via an interaction with its C-terminus, thereby allowing substrate entry and access to the site of proteolysis. Thus, the C-termini of the proteasomal ATPase may function like a 'key in a lock' to induce gate opening and therefore regulate proteolysis. The sequence is that of Proteasome-associated ATPase from Streptomyces coelicolor (strain ATCC BAA-471 / A3(2) / M145).